We begin with the raw amino-acid sequence, 304 residues long: MGAQLRVYRRRIRSTKSMAKITRAMELIAATRITKAQRAAEAAAPYAREITRAVSAVAARVSDHPLLTEAENPTRAAVLVITSDKGLAGAYTANAIKEAERLTALLNEQGKEVLTYMVGRKGIGFYKFRERPLADSWEGFTERPSYMHAMEISSALMEKFIQETAEGGVDEIHIVSTEFISMINQRARASRILPLEVEEVDSKVLEAEQGPLPLYEFEPGAEEVLDQLLPKYVTNRIYFALLESAASQHASRRAAMKAATDNAEELVKTLTRQANQARQAEITNEISEIVGGADALAAASAGSE.

The protein belongs to the ATPase gamma chain family. As to quaternary structure, F-type ATPases have 2 components, CF(1) - the catalytic core - and CF(0) - the membrane proton channel. CF(1) has five subunits: alpha(3), beta(3), gamma(1), delta(1), epsilon(1). CF(0) has three main subunits: a, b and c.

The protein localises to the cell membrane. In terms of biological role, produces ATP from ADP in the presence of a proton gradient across the membrane. The gamma chain is believed to be important in regulating ATPase activity and the flow of protons through the CF(0) complex. This is ATP synthase gamma chain from Thermobifida fusca (strain YX).